A 206-amino-acid polypeptide reads, in one-letter code: Outer-membrane lipoprotein carrier protein (206 aa).

An N-terminal signal peptide occupies residues 1-21 (MKKLLCAVLLSPLLYSNAVLA).

This sequence belongs to the LolA family. Monomer.

The protein resides in the periplasm. In terms of biological role, participates in the translocation of lipoproteins from the inner membrane to the outer membrane. Only forms a complex with a lipoprotein if the residue after the N-terminal Cys is not an aspartate (The Asp acts as a targeting signal to indicate that the lipoprotein should stay in the inner membrane). This chain is Outer-membrane lipoprotein carrier protein, found in Shewanella sp. (strain MR-4).